The following is a 463-amino-acid chain: MTQLLAITGTIAAIATAIVPQQGSVGIVRVSGSQAIAIAQTLFHAPGKQVWESHRILYGYIRHPQTRQIVDEALLLLMKAPRSYTREDVVEFHCHGGIMAVQQVLQLCLEGGARLAQPGEFTLRAFLNGRLDLTQAESIADLVGARSPQAAQTALAGLQGKLAHPIRQLRANCLDILAEIEARIDFEEDLPPLDDEKIISDIENIAAEISQLLATKDKGELLRTGLKVAIVGRPNVGKSSLLNAWSQSDRAIVTDLPGTTRDVVESQLVVGGIPVQVLDTAGIRETSDQVEKIGVERSRQAANTADLVLLTIDAATGWTTGDQEIYEQVKHRPLILVMNKIDLVDKKLITSLEYPKNITQIVHTAAAQKQGIDALETAILEIVQTGKVKAADMDLAINQRQAAALTQAKISLEQVQATITQQLPLDFWTIDLRGAIQALGEITGEEVTESVLDRIFSRFCIGK.

(6S)-5-formyl-5,6,7,8-tetrahydrofolate is bound by residues arginine 29, glutamate 91, and arginine 130. A TrmE-type G domain is found at 225-384 (GLKVAIVGRP…LETAILEIVQ (160 aa)). Position 235 (asparagine 235) interacts with K(+). GTP contacts are provided by residues 235–240 (NVGKSS), 254–260 (TDLPGTT), and 279–282 (DTAG). Serine 239 provides a ligand contact to Mg(2+). 3 residues coordinate K(+): threonine 254, leucine 256, and threonine 259. Threonine 260 is a Mg(2+) binding site. A (6S)-5-formyl-5,6,7,8-tetrahydrofolate-binding site is contributed by lysine 463.

This sequence belongs to the TRAFAC class TrmE-Era-EngA-EngB-Septin-like GTPase superfamily. TrmE GTPase family. As to quaternary structure, homodimer. Heterotetramer of two MnmE and two MnmG subunits. Requires K(+) as cofactor.

The protein localises to the cytoplasm. In terms of biological role, exhibits a very high intrinsic GTPase hydrolysis rate. Involved in the addition of a carboxymethylaminomethyl (cmnm) group at the wobble position (U34) of certain tRNAs, forming tRNA-cmnm(5)s(2)U34. This chain is tRNA modification GTPase MnmE, found in Trichormus variabilis (strain ATCC 29413 / PCC 7937) (Anabaena variabilis).